A 339-amino-acid chain; its full sequence is NADH-quinone oxidoreductase subunit H (339 aa).

A run of 9 helical transmembrane segments spans residues 10 to 30 (FPLT…ILCV), 50 to 70 (PNVV…KLLF), 82 to 102 (ILFI…WAVI), 115 to 135 (VGVL…IIAG), 155 to 175 (ISYE…TGTL), 187 to 207 (LPWW…ISVL), 235 to 255 (MGFA…SAMT), 275 to 295 (IPGF…FLWI), and 311 to 331 (GWKV…SVLF).

This sequence belongs to the complex I subunit 1 family. NDH-1 is composed of 14 different subunits. Subunits NuoA, H, J, K, L, M, N constitute the membrane sector of the complex.

The protein localises to the cell inner membrane. It carries out the reaction a quinone + NADH + 5 H(+)(in) = a quinol + NAD(+) + 4 H(+)(out). Functionally, NDH-1 shuttles electrons from NADH, via FMN and iron-sulfur (Fe-S) centers, to quinones in the respiratory chain. The immediate electron acceptor for the enzyme in this species is believed to be ubiquinone. Couples the redox reaction to proton translocation (for every two electrons transferred, four hydrogen ions are translocated across the cytoplasmic membrane), and thus conserves the redox energy in a proton gradient. This subunit may bind ubiquinone. This Rickettsia typhi (strain ATCC VR-144 / Wilmington) protein is NADH-quinone oxidoreductase subunit H.